Consider the following 548-residue polypeptide: Probable malate:quinone oxidoreductase (548 aa).

The disordered stretch occupies residues 521–548 (DKPQAADSTPKPQLKPKPVQKEVADIAL). Over residues 539-548 (VQKEVADIAL) the composition is skewed to basic and acidic residues.

The protein belongs to the MQO family. FAD serves as cofactor.

The enzyme catalyses (S)-malate + a quinone = a quinol + oxaloacetate. It functions in the pathway carbohydrate metabolism; tricarboxylic acid cycle; oxaloacetate from (S)-malate (quinone route): step 1/1. This is Probable malate:quinone oxidoreductase from Escherichia coli (strain ATCC 8739 / DSM 1576 / NBRC 3972 / NCIMB 8545 / WDCM 00012 / Crooks).